We begin with the raw amino-acid sequence, 664 residues long: UvrABC system protein B (664 aa).

Positions 25 to 182 (KSFGEGKNKI…RKFLHIQYAR (158 aa)) constitute a Helicase ATP-binding domain. 38–45 (GVTGSGKT) provides a ligand contact to ATP. Residues 91–114 (YYDYYQPEAYVPSSDTFIEKDMSM) carry the Beta-hairpin motif. The Helicase C-terminal domain maps to 429–595 (QIEDLLNEIR…TIQKEIHDIL (167 aa)). Residues 625-660 (DKLREALKREMLRYANDMDFEKAAMFRDKMLALGPD) enclose the UVR domain.

Belongs to the UvrB family. In terms of assembly, forms a heterotetramer with UvrA during the search for lesions. Interacts with UvrC in an incision complex.

It is found in the cytoplasm. Its function is as follows. The UvrABC repair system catalyzes the recognition and processing of DNA lesions. A damage recognition complex composed of 2 UvrA and 2 UvrB subunits scans DNA for abnormalities. Upon binding of the UvrA(2)B(2) complex to a putative damaged site, the DNA wraps around one UvrB monomer. DNA wrap is dependent on ATP binding by UvrB and probably causes local melting of the DNA helix, facilitating insertion of UvrB beta-hairpin between the DNA strands. Then UvrB probes one DNA strand for the presence of a lesion. If a lesion is found the UvrA subunits dissociate and the UvrB-DNA preincision complex is formed. This complex is subsequently bound by UvrC and the second UvrB is released. If no lesion is found, the DNA wraps around the other UvrB subunit that will check the other stand for damage. The protein is UvrABC system protein B of Leptospira biflexa serovar Patoc (strain Patoc 1 / Ames).